A 726-amino-acid polypeptide reads, in one-letter code: Phenylalanine--tRNA ligase beta subunit (726 aa).

The tRNA-binding domain maps to 38–150 (FSSSKGLLFA…NFASLNDDAS (113 aa)). The B5 domain maps to 394–467 (DKKVEINFDE…RFYNYDNFKE (74 aa)). Mg(2+)-binding residues include aspartate 445, aspartate 451, glutamate 454, and glutamate 455.

This sequence belongs to the phenylalanyl-tRNA synthetase beta subunit family. Type 1 subfamily. As to quaternary structure, tetramer of two alpha and two beta subunits. Mg(2+) serves as cofactor.

It localises to the cytoplasm. It carries out the reaction tRNA(Phe) + L-phenylalanine + ATP = L-phenylalanyl-tRNA(Phe) + AMP + diphosphate + H(+). In Mycoplasmopsis synoviae (strain 53) (Mycoplasma synoviae), this protein is Phenylalanine--tRNA ligase beta subunit.